Here is a 403-residue protein sequence, read N- to C-terminus: Signal-transducing adaptor protein 2 (403 aa).

In terms of domain architecture, PH spans 18-130; it reads PSHYYESFLE…VPTDLTLLPG (113 aa). Y22 carries the phosphotyrosine; by SRC modification. The SH2 domain occupies 133–248; it reads YMMSEVLAKE…KALVPFLLDE (116 aa). Phosphotyrosine; by PTK6 is present on Y250. Residues 270–308 form a disordered region; that stretch reads APSAPGPGPAPCTGGPKPLSPASSQDKLPPLPPLPNQEE. Y310 carries the phosphotyrosine modification. At Y322 the chain carries Phosphotyrosine; by SRC. The disordered stretch occupies residues 331–374; the sequence is SWPVILKPKKLPKPPAKLPKPPVGPKPEPKVFNGGLGRKLPVSS. Residues 343–356 are compositionally biased toward pro residues; it reads KPPAKLPKPPVGPK. Residues 382 to 402 adopt a coiled-coil conformation; sequence AGLADMTAELQKKLEKRRALE.

As to quaternary structure, interacts with PTK6 and CSF1R. Phosphorylated on tyrosine. Tyr-250 may be important for interaction with kinases. Phosphorylated by PTK6 at Tyr-250 modulates PTK6-mediated STAT3 activation. Tyr-22 and Tyr-322 appears to be phosphorylated by SRC. In terms of tissue distribution, widely expressed.

It localises to the cytoplasm. Functionally, substrate of protein kinase PTK6. May play a regulatory role in the acute-phase response in systemic inflammation and may modulate STAT3 activity. This is Signal-transducing adaptor protein 2 (STAP2) from Homo sapiens (Human).